The chain runs to 341 residues: S-adenosylmethionine:tRNA ribosyltransferase-isomerase (341 aa).

Belongs to the QueA family. In terms of assembly, monomer.

The protein resides in the cytoplasm. The catalysed reaction is 7-aminomethyl-7-carbaguanosine(34) in tRNA + S-adenosyl-L-methionine = epoxyqueuosine(34) in tRNA + adenine + L-methionine + 2 H(+). It functions in the pathway tRNA modification; tRNA-queuosine biosynthesis. In terms of biological role, transfers and isomerizes the ribose moiety from AdoMet to the 7-aminomethyl group of 7-deazaguanine (preQ1-tRNA) to give epoxyqueuosine (oQ-tRNA). This is S-adenosylmethionine:tRNA ribosyltransferase-isomerase from Staphylococcus epidermidis (strain ATCC 35984 / DSM 28319 / BCRC 17069 / CCUG 31568 / BM 3577 / RP62A).